The following is a 946-amino-acid chain: Bifunctional glutamine synthetase adenylyltransferase/adenylyl-removing enzyme (946 aa).

The tract at residues 1 to 440 (MKPLSSPLQQ…VFNELIGDDE (440 aa)) is adenylyl removase. The interval 449–946 (SEQWRELWQD…ASWQKWLVEE (498 aa)) is adenylyl transferase.

This sequence belongs to the GlnE family. Mg(2+) is required as a cofactor.

The enzyme catalyses [glutamine synthetase]-O(4)-(5'-adenylyl)-L-tyrosine + phosphate = [glutamine synthetase]-L-tyrosine + ADP. It carries out the reaction [glutamine synthetase]-L-tyrosine + ATP = [glutamine synthetase]-O(4)-(5'-adenylyl)-L-tyrosine + diphosphate. Its function is as follows. Involved in the regulation of glutamine synthetase GlnA, a key enzyme in the process to assimilate ammonia. When cellular nitrogen levels are high, the C-terminal adenylyl transferase (AT) inactivates GlnA by covalent transfer of an adenylyl group from ATP to specific tyrosine residue of GlnA, thus reducing its activity. Conversely, when nitrogen levels are low, the N-terminal adenylyl removase (AR) activates GlnA by removing the adenylyl group by phosphorolysis, increasing its activity. The regulatory region of GlnE binds the signal transduction protein PII (GlnB) which indicates the nitrogen status of the cell. This chain is Bifunctional glutamine synthetase adenylyltransferase/adenylyl-removing enzyme, found in Escherichia coli O81 (strain ED1a).